The chain runs to 464 residues: Glucose-6-phosphate isomerase (464 aa).

The active-site Proton donor is Glu-290. Residues His-319 and Lys-433 contribute to the active site.

Belongs to the GPI family.

It is found in the cytoplasm. It carries out the reaction alpha-D-glucose 6-phosphate = beta-D-fructose 6-phosphate. It participates in carbohydrate biosynthesis; gluconeogenesis. Its pathway is carbohydrate degradation; glycolysis; D-glyceraldehyde 3-phosphate and glycerone phosphate from D-glucose: step 2/4. Its function is as follows. Catalyzes the reversible isomerization of glucose-6-phosphate to fructose-6-phosphate. The chain is Glucose-6-phosphate isomerase from Carboxydothermus hydrogenoformans (strain ATCC BAA-161 / DSM 6008 / Z-2901).